Reading from the N-terminus, the 267-residue chain is Glutamate racemase (267 aa).

Substrate-binding positions include 13-14 and 45-46; these read DS and YG. Residue Cys-77 is the Proton donor/acceptor of the active site. Substrate is bound at residue 78–79; that stretch reads NT. Catalysis depends on Cys-192, which acts as the Proton donor/acceptor. 193–194 contributes to the substrate binding site; that stretch reads TH.

The protein belongs to the aspartate/glutamate racemases family.

The catalysed reaction is L-glutamate = D-glutamate. It participates in cell wall biogenesis; peptidoglycan biosynthesis. Its function is as follows. Provides the (R)-glutamate required for cell wall biosynthesis. This Sinorhizobium fredii (strain NBRC 101917 / NGR234) protein is Glutamate racemase.